Consider the following 108-residue polypeptide: ATP-dependent Clp protease adapter protein ClpS (108 aa).

The span at 1–10 (MADSDKHGDE) shows a compositional bias: basic and acidic residues. The tract at residues 1 to 21 (MADSDKHGDEGPSTGVVVKAK) is disordered.

Belongs to the ClpS family. Binds to the N-terminal domain of the chaperone ClpA.

Its function is as follows. Involved in the modulation of the specificity of the ClpAP-mediated ATP-dependent protein degradation. The protein is ATP-dependent Clp protease adapter protein ClpS of Rhodospirillum centenum (strain ATCC 51521 / SW).